Consider the following 204-residue polypeptide: Small ribosomal subunit protein uS3 (204 aa).

A KH type-2 domain is found at 37–105 (IRSYINESFK…NVEVNVVGVK (69 aa)).

The protein belongs to the universal ribosomal protein uS3 family. As to quaternary structure, part of the 30S ribosomal subunit. Forms a tight complex with proteins S10 and S14.

Binds the lower part of the 30S subunit head. Binds mRNA in the 70S ribosome, positioning it for translation. This is Small ribosomal subunit protein uS3 from Wolbachia pipientis wMel.